Consider the following 85-residue polypeptide: Large ribosomal subunit protein bL27 (85 aa).

The disordered stretch occupies residues 1 to 21 (MAHKKAAGSTKNGRDSNAKRL).

This sequence belongs to the bacterial ribosomal protein bL27 family.

This is Large ribosomal subunit protein bL27 from Hydrogenovibrio crunogenus (strain DSM 25203 / XCL-2) (Thiomicrospira crunogena).